The sequence spans 201 residues: Recombination protein RecR (201 aa).

Residues Cys-57 to Cys-72 form a C4-type zinc finger. The 96-residue stretch at Gly-81–Pro-176 folds into the Toprim domain.

Belongs to the RecR family.

Functionally, may play a role in DNA repair. It seems to be involved in an RecBC-independent recombinational process of DNA repair. It may act with RecF and RecO. In Histophilus somni (strain 2336) (Haemophilus somnus), this protein is Recombination protein RecR.